The chain runs to 181 residues: Transcriptional repressor NrdR (181 aa).

A zinc finger spans residues 3 to 34 (CLFCQHTYTRVIDSRVSEDGATIRRRRECEAC). Positions 49 to 139 (PVIIKKDGGR…VYRSFQDVAD (91 aa)) constitute an ATP-cone domain.

It belongs to the NrdR family. It depends on Zn(2+) as a cofactor.

Its function is as follows. Negatively regulates transcription of bacterial ribonucleotide reductase nrd genes and operons by binding to NrdR-boxes. This is Transcriptional repressor NrdR from Xylella fastidiosa (strain 9a5c).